The sequence spans 353 residues: Polycomb group RING finger protein 6 (353 aa).

The disordered stretch occupies residues 1–116; that stretch reads MDEAETDATE…FSLRLESGRA (116 aa). Basic and acidic residues predominate over residues 9-19; sequence TENKRASEAKR. A compositionally biased stretch (pro residues) spans 23–39; the sequence is MPPPPPPPPPISPPALI. Serine 34 bears the Phosphoserine mark. Residues 40–52 show a composition bias toward low complexity; sequence PAPAAGEEGPASL. Basic and acidic residues predominate over residues 69-82; sequence EPERSLGRLRGRFE. Residues 71–112 adopt a coiled-coil conformation; the sequence is ERSLGRLRGRFEDYDEELEEEEEMEEEEEEEEEMSHFSLRLE. Residues 83 to 103 are compositionally biased toward acidic residues; sequence DYDEELEEEEEMEEEEEEEEE. Serine 118 bears the Phosphoserine mark. Residues 137-176 form an RING-type zinc finger; sequence CSICKGYLIDATTITECLHTFCKSCIVRHFYYSNRCPKCN. Glycyl lysine isopeptide (Lys-Gly) (interchain with G-Cter in SUMO2) cross-links involve residues lysine 226 and lysine 237.

In terms of assembly, component of a PRC1-like complex. Interacts with BMI1/PCGF4, RING1 and RNF2. Interacts with KDM5D. Interacts with CBX4, CBX6, CBX7 and CBX8. In terms of processing, phosphorylated during mitosis. As to expression, expressed in ovary, testis, stomach, liver, thymus and kidney (at protein level).

It localises to the nucleus. Functionally, transcriptional repressor. May modulate the levels of histone H3K4Me3 by activating KDM5D histone demethylase. Component of a Polycomb group (PcG) multiprotein PRC1-like complex, a complex class required to maintain the transcriptionally repressive state of many genes, including Hox genes, throughout development. PcG PRC1 complex acts via chromatin remodeling and modification of histones; it mediates monoubiquitination of histone H2A 'Lys-119', rendering chromatin heritably changed in its expressibility. Within the PRC1-like complex, regulates RNF2 ubiquitin ligase activity. The sequence is that of Polycomb group RING finger protein 6 (Pcgf6) from Mus musculus (Mouse).